We begin with the raw amino-acid sequence, 204 residues long: N-(5'-phosphoribosyl)anthranilate isomerase (204 aa).

It belongs to the TrpF family.

It catalyses the reaction N-(5-phospho-beta-D-ribosyl)anthranilate = 1-(2-carboxyphenylamino)-1-deoxy-D-ribulose 5-phosphate. It participates in amino-acid biosynthesis; L-tryptophan biosynthesis; L-tryptophan from chorismate: step 3/5. This is N-(5'-phosphoribosyl)anthranilate isomerase from Desulforudis audaxviator (strain MP104C).